The sequence spans 141 residues: Hemoglobin subunit alpha (141 aa).

The Globin domain maps to 1–141 (VLSPADKTNV…VSTVLTSKYR (141 aa)). Phosphoserine is present on Ser3. Position 7 is an N6-succinyllysine (Lys7). Residue Thr8 is modified to Phosphothreonine. Lys11 carries the N6-succinyllysine modification. At Lys16 the chain carries N6-acetyllysine; alternate. Position 16 is an N6-succinyllysine; alternate (Lys16). The residue at position 24 (Tyr24) is a Phosphotyrosine. Position 35 is a phosphoserine (Ser35). Lys40 carries the N6-succinyllysine modification. O2 is bound at residue His58. Position 87 (His87) interacts with heme b. Residue Ser102 is modified to Phosphoserine. Thr108 carries the post-translational modification Phosphothreonine. Phosphoserine occurs at positions 124 and 131. 2 positions are modified to phosphothreonine: Thr134 and Thr137. Ser138 carries the post-translational modification Phosphoserine.

Belongs to the globin family. Heterotetramer of two alpha chains and two beta chains. As to expression, red blood cells.

Its function is as follows. Involved in oxygen transport from the lung to the various peripheral tissues. Functionally, hemopressin acts as an antagonist peptide of the cannabinoid receptor CNR1. Hemopressin-binding efficiently blocks cannabinoid receptor CNR1 and subsequent signaling. The protein is Hemoglobin subunit alpha (HBA) of Cynopterus sphinx (Indian short-nosed fruit bat).